The primary structure comprises 420 residues: MKTLIARHKAGEHIGICSVCSAHPLVIEAALAFDRNSTRKVLIEATSNQVNQFGGYTGMTPADFREFVFTIADKVGFARERIILGGDHLGPNCWQQENADAAMEKSVELVKAYVRAGFSKIHLDASMSCAGDPIPLAPETVAERAAVLCFAAESVATDCQREQLSYVIGTEVPVPGGEASAIQSVHITRVEDAANTLRTHQKAFIARGLAEALTRVIAIVVQPGVEFDHSNIIHYQPQEAQPLAQWIENTRMVYEAHSTDYQTRTAYWELVRDHFAILKVGPALTFALREAIFALAQIEQELIAPENRSGCLAVIEEVMFDEPQYWKKYYRTGFNDSLLDIRYSLSDRIRYYWPHSRIKNSVETMMVNLEGMEIPLGMISQYLPKQFERIQSGELSAIPHQLIMDKIYDVLRAYRYGCAE.

It belongs to the GatZ/KbaZ family. GatZ subfamily. In terms of assembly, forms a complex with GatY.

It functions in the pathway carbohydrate metabolism; D-tagatose 6-phosphate degradation; D-glyceraldehyde 3-phosphate and glycerone phosphate from D-tagatose 6-phosphate: step 2/2. Its function is as follows. Component of the tagatose-1,6-bisphosphate aldolase GatYZ that is required for full activity and stability of the Y subunit. Could have a chaperone-like function for the proper and stable folding of GatY. When expressed alone, GatZ does not show any aldolase activity. Is involved in the catabolism of galactitol. This chain is D-tagatose-1,6-bisphosphate aldolase subunit GatZ (gatZ), found in Escherichia coli.